Here is a 273-residue protein sequence, read N- to C-terminus: 4-hydroxy-tetrahydrodipicolinate reductase (273 aa).

NAD(+) contacts are provided by residues 12 to 17 and Glu-38; that span reads GAGGRM. Arg-39 contacts NADP(+). Residues 102-104 and 126-129 each bind NAD(+); these read GTT and AANF. Residue His-159 is the Proton donor/acceptor of the active site. A (S)-2,3,4,5-tetrahydrodipicolinate-binding site is contributed by His-160. Lys-163 functions as the Proton donor in the catalytic mechanism. 169 to 170 contributes to the (S)-2,3,4,5-tetrahydrodipicolinate binding site; it reads GT.

This sequence belongs to the DapB family. Homotetramer.

Its subcellular location is the cytoplasm. It catalyses the reaction (S)-2,3,4,5-tetrahydrodipicolinate + NAD(+) + H2O = (2S,4S)-4-hydroxy-2,3,4,5-tetrahydrodipicolinate + NADH + H(+). The catalysed reaction is (S)-2,3,4,5-tetrahydrodipicolinate + NADP(+) + H2O = (2S,4S)-4-hydroxy-2,3,4,5-tetrahydrodipicolinate + NADPH + H(+). It participates in amino-acid biosynthesis; L-lysine biosynthesis via DAP pathway; (S)-tetrahydrodipicolinate from L-aspartate: step 4/4. Its function is as follows. Catalyzes the conversion of 4-hydroxy-tetrahydrodipicolinate (HTPA) to tetrahydrodipicolinate. This is 4-hydroxy-tetrahydrodipicolinate reductase from Salmonella dublin (strain CT_02021853).